The following is a 130-amino-acid chain: Small ribosomal subunit protein uS8 (130 aa).

The protein belongs to the universal ribosomal protein uS8 family. In terms of assembly, part of the 30S ribosomal subunit. Contacts proteins S5 and S12.

Functionally, one of the primary rRNA binding proteins, it binds directly to 16S rRNA central domain where it helps coordinate assembly of the platform of the 30S subunit. This is Small ribosomal subunit protein uS8 from Shewanella denitrificans (strain OS217 / ATCC BAA-1090 / DSM 15013).